The primary structure comprises 464 residues: DNA primase DnaG (464 aa).

One can recognise a Toprim domain in the interval 171–245 (DTIIIVEGRA…DIDYVARAPK (75 aa)). Residues glutamate 177, aspartate 219, and aspartate 221 each contribute to the Mg(2+) site.

This sequence belongs to the archaeal DnaG primase family. As to quaternary structure, forms a ternary complex with MCM helicase and DNA. The cofactor is Mg(2+).

The enzyme catalyses ssDNA + n NTP = ssDNA/pppN(pN)n-1 hybrid + (n-1) diphosphate.. Its function is as follows. RNA polymerase that catalyzes the synthesis of short RNA molecules used as primers for DNA polymerase during DNA replication. The protein is DNA primase DnaG of Methanococcus aeolicus (strain ATCC BAA-1280 / DSM 17508 / OCM 812 / Nankai-3).